A 574-amino-acid chain; its full sequence is Serine/threonine-protein kinase fray1 (574 aa).

Residues 24-41 (NHHDLPDSDSDSSSREEE) show a composition bias toward basic and acidic residues. The segment at 24–64 (NHHDLPDSDSDSSSREEELMNSSGGGNGKEPIGEKKKLPSH) is disordered. One can recognise a Protein kinase domain in the interval 97–357 (YNLIEPIGEG…ASKLLEHKVF (261 aa)). ATP contacts are provided by residues 103–111 (IGEGTEGRV) and lysine 126. Aspartate 221 acts as the Proton acceptor in catalysis. Threonine 256 carries the phosphothreonine; by autocatalysis modification. 3 disordered regions span residues 381–447 (YRES…LVNM), 462–514 (LSSG…PEKE), and 532–554 (FGSP…HEHH). Composition is skewed to low complexity over residues 386–403 (SPAS…PSSP), 418–441 (KNIK…NLSN), and 462–475 (LSSG…SSDL). Positions 478–491 (GHLHKIGTPKKKHS) are enriched in basic residues. The span at 492 to 506 (PSGSIGDSHGSISPP) shows a compositional bias: low complexity. Basic and acidic residues predominate over residues 536–553 (KEGDHNHQHHKSEGDHEH).

This sequence belongs to the protein kinase superfamily. STE Ser/Thr protein kinase family. STE20 subfamily. The cofactor is Mn(2+). In terms of processing, undergoes autophosphorylation in the catalytic domain.

The catalysed reaction is L-seryl-[protein] + ATP = O-phospho-L-seryl-[protein] + ADP + H(+). It catalyses the reaction L-threonyl-[protein] + ATP = O-phospho-L-threonyl-[protein] + ADP + H(+). The polypeptide is Serine/threonine-protein kinase fray1 (Dictyostelium discoideum (Social amoeba)).